A 377-amino-acid polypeptide reads, in one-letter code: Exopolygalacturonase (377 aa).

Positions 1–5 (RGVQS) are cleaved as a signal peptide. PbH1 repeat units follow at residues 159 to 184 (CEDI…IHVG), 186 to 207 (SKGV…SIGP), 209 to 229 (SQNV…SIGS), 239 to 260 (VRGI…RVKT), and 269 to 290 (ATDL…ILDQ). Residue Asp-200 is the Proton donor of the active site. Residue Asn-211 is glycosylated (N-linked (GlcNAc...) asparagine). The active site involves His-223. Residue Asn-345 is glycosylated (N-linked (GlcNAc...) asparagine).

Belongs to the glycosyl hydrolase 28 family. In terms of assembly, monomer. Glycosylated. As to expression, expressed in pollen (at protein level). Expressed in stem, but not in leaves (at protein level).

Its subcellular location is the secreted. The protein localises to the cell wall. It is found in the golgi apparatus. The protein resides in the endoplasmic reticulum. It localises to the vesicle. The enzyme catalyses [(1-&gt;4)-alpha-D-galacturonosyl](n) + H2O = alpha-D-galacturonate + [(1-&gt;4)-alpha-D-galacturonosyl](n-1). In terms of biological role, may function in depolymerizing pectin during pollen development, germination, and tube growth. Acts as an exo-polygalacturonase. In Platanus acerifolia (London plane tree), this protein is Exopolygalacturonase.